The chain runs to 180 residues: Bifunctional protein PyrR (180 aa).

The PRPP-binding motif lies at Val-101–Thr-113.

The protein belongs to the purine/pyrimidine phosphoribosyltransferase family. PyrR subfamily. As to quaternary structure, homodimer and homohexamer; in equilibrium.

It carries out the reaction UMP + diphosphate = 5-phospho-alpha-D-ribose 1-diphosphate + uracil. In terms of biological role, regulates transcriptional attenuation of the pyrimidine nucleotide (pyr) operon by binding in a uridine-dependent manner to specific sites on pyr mRNA. This disrupts an antiterminator hairpin in the RNA and favors formation of a downstream transcription terminator, leading to a reduced expression of downstream genes. Its function is as follows. Also displays a weak uracil phosphoribosyltransferase activity which is not physiologically significant. The polypeptide is Bifunctional protein PyrR (Bacillus mycoides (strain KBAB4) (Bacillus weihenstephanensis)).